The chain runs to 273 residues: 3-methyl-2-oxobutanoate hydroxymethyltransferase (273 aa).

Residues aspartate 49 and aspartate 88 each contribute to the Mg(2+) site. 3-methyl-2-oxobutanoate contacts are provided by residues 49 to 50 (DS), aspartate 88, and lysine 118. Glutamate 120 contacts Mg(2+). The active-site Proton acceptor is glutamate 187.

It belongs to the PanB family. Homodecamer; pentamer of dimers. It depends on Mg(2+) as a cofactor.

It is found in the cytoplasm. The catalysed reaction is 3-methyl-2-oxobutanoate + (6R)-5,10-methylene-5,6,7,8-tetrahydrofolate + H2O = 2-dehydropantoate + (6S)-5,6,7,8-tetrahydrofolate. The protein operates within cofactor biosynthesis; (R)-pantothenate biosynthesis; (R)-pantoate from 3-methyl-2-oxobutanoate: step 1/2. In terms of biological role, catalyzes the reversible reaction in which hydroxymethyl group from 5,10-methylenetetrahydrofolate is transferred onto alpha-ketoisovalerate to form ketopantoate. The sequence is that of 3-methyl-2-oxobutanoate hydroxymethyltransferase from Sinorhizobium medicae (strain WSM419) (Ensifer medicae).